The sequence spans 444 residues: Ribosome biogenesis protein WDR12 homolog (444 aa).

The segment at 7–87 (VLVKFVTKLP…ESTLEVEYVP (81 aa)) is ubiquitin-like (UBL) domain. The disordered stretch occupies residues 91 to 123 (PPQQKNSTPHDDWVSSVDGSRCAPASSSGGSPS). WD repeat units lie at residues 105-148 (SSVD…VASV), 150-191 (AHAG…EEDA), and 203-242 (GHED…RWAA). The disordered stretch occupies residues 243–264 (GTAEASKKKRKTGTANGSAAAG). WD repeat units lie at residues 272 to 310 (GHLH…AADT), 312 to 352 (NGSK…GSDA), 360 to 400 (AHGG…PLGM), and 403 to 444 (HHTD…YIVS).

Belongs to the WD repeat WDR12/YTM1 family.

The protein resides in the nucleus. It localises to the nucleolus. Its subcellular location is the nucleoplasm. In terms of biological role, required for maturation of ribosomal RNAs and formation of the large ribosomal subunit. This chain is Ribosome biogenesis protein WDR12 homolog, found in Chlamydomonas reinhardtii (Chlamydomonas smithii).